The following is a 643-amino-acid chain: 1-deoxy-D-xylulose-5-phosphate synthase (643 aa).

Residues H72 and 113–115 (GHA) each bind thiamine diphosphate. Mg(2+) is bound at residue D144. Residues 145–146 (GA), N174, Y287, and E370 contribute to the thiamine diphosphate site. N174 contacts Mg(2+).

It belongs to the transketolase family. DXPS subfamily. Homodimer. Mg(2+) serves as cofactor. The cofactor is thiamine diphosphate.

The catalysed reaction is D-glyceraldehyde 3-phosphate + pyruvate + H(+) = 1-deoxy-D-xylulose 5-phosphate + CO2. The protein operates within metabolic intermediate biosynthesis; 1-deoxy-D-xylulose 5-phosphate biosynthesis; 1-deoxy-D-xylulose 5-phosphate from D-glyceraldehyde 3-phosphate and pyruvate: step 1/1. In terms of biological role, catalyzes the acyloin condensation reaction between C atoms 2 and 3 of pyruvate and glyceraldehyde 3-phosphate to yield 1-deoxy-D-xylulose-5-phosphate (DXP). This Prochlorococcus marinus (strain SARG / CCMP1375 / SS120) protein is 1-deoxy-D-xylulose-5-phosphate synthase.